The sequence spans 273 residues: ATP synthase subunit a (273 aa).

Transmembrane regions (helical) follow at residues 41–61 (ILNI…LLIF), 101–121 (LIAP…LMDL), 122–142 (LAVD…ALRV), 143–163 (VPSA…ILII), 183–203 (PFNH…SLLS), 221–241 (LVFI…ISVP), and 247–267 (IIVI…YIAM).

The protein belongs to the ATPase A chain family. As to quaternary structure, F-type ATPases have 2 components, CF(1) - the catalytic core - and CF(0) - the membrane proton channel. CF(1) has five subunits: alpha(3), beta(3), gamma(1), delta(1), epsilon(1). CF(0) has three main subunits: a(1), b(2) and c(9-12). The alpha and beta chains form an alternating ring which encloses part of the gamma chain. CF(1) is attached to CF(0) by a central stalk formed by the gamma and epsilon chains, while a peripheral stalk is formed by the delta and b chains.

It localises to the cell membrane. Its function is as follows. Key component of the proton channel; it plays a direct role in the translocation of protons across the membrane. The chain is ATP synthase subunit a from Baumannia cicadellinicola subsp. Homalodisca coagulata.